A 472-amino-acid chain; its full sequence is Collagenase 3 (472 aa).

A signal peptide spans 1–19; it reads MHPGVLAAFLFLSWTRCWS. A propeptide spans 20–104 (activation peptide); it reads LPVPNDDDDD…PRCGVPDVGE (85 aa). The Cysteine switch signature appears at 95–102; the sequence is PRCGVPDV. Residue cysteine 97 participates in Zn(2+) binding. N-linked (GlcNAc...) asparagine glycosylation is present at asparagine 118. A Ca(2+)-binding site is contributed by aspartate 129. N-linked (GlcNAc...) asparagine glycosylation is found at asparagine 153 and asparagine 159. A Ca(2+)-binding site is contributed by aspartate 163. Zn(2+)-binding residues include histidine 173 and aspartate 175. The interaction with TIMP2 stretch occupies residues 177–247; that stretch reads YPFDGPSGLL…GALMFPIYTY (71 aa). 4 residues coordinate Ca(2+): aspartate 180, glycine 181, serine 183, and leucine 185. Position 188 (histidine 188) interacts with Zn(2+). Positions 195, 197, and 199 each coordinate Ca(2+). Residue histidine 201 coordinates Zn(2+). Positions 203, 204, and 206 each coordinate Ca(2+). Residue histidine 223 participates in Zn(2+) binding. Glutamate 224 is an active-site residue. Zn(2+) is bound by residues histidine 227, histidine 233, and methionine 241. Residues 269–472 form an interaction with collagen region; that stretch reads PGDEDPNPKH…VMPTNSLLWC (204 aa). Hemopexin repeat units follow at residues 282-331, 332-378, 380-428, and 429-472; these read PDKC…WPEL, PNRI…GFPK, VKKI…FPGI, and GDKV…LLWC. A disulfide bridge links cysteine 285 with cysteine 472. The Ca(2+) site is built by aspartate 292, isoleucine 294, aspartate 336, and alanine 338. At tyrosine 367 the chain carries Phosphotyrosine; by PKDCC. Positions 384, 386, 433, and 435 each coordinate Ca(2+).

Belongs to the peptidase M10A family. It depends on Ca(2+) as a cofactor. Zn(2+) is required as a cofactor. The proenzyme is activated by removal of the propeptide; this cleavage can be effected by other matrix metalloproteinases, such as MMP2, MMP3 and MMP14 and may involve several cleavage steps. Cleavage can also be autocatalytic, after partial maturation by another protease or after treatment with 4-aminophenylmercuric acetate (APMA) (in vitro). In terms of processing, N-glycosylated. Post-translationally, tyrosine phosphorylated by PKDCC/VLK. As to expression, seems to be specific to breast carcinomas.

The protein resides in the secreted. The protein localises to the extracellular space. Its subcellular location is the extracellular matrix. Its function is as follows. Plays a role in the degradation of extracellular matrix proteins including fibrillar collagen, fibronectin, TNC and ACAN. Cleaves triple helical collagens, including type I, type II and type III collagen, but has the highest activity with soluble type II collagen. Can also degrade collagen type IV, type XIV and type X. May also function by activating or degrading key regulatory proteins, such as TGFB1 and CCN2. Plays a role in wound healing, tissue remodeling, cartilage degradation, bone development, bone mineralization and ossification. Required for normal embryonic bone development and ossification. Plays a role in the healing of bone fractures via endochondral ossification. Plays a role in wound healing, probably by a mechanism that involves proteolytic activation of TGFB1 and degradation of CCN2. Plays a role in keratinocyte migration during wound healing. May play a role in cell migration and in tumor cell invasion. The polypeptide is Collagenase 3 (MMP13) (Equus caballus (Horse)).